We begin with the raw amino-acid sequence, 1280 residues long: Ankyrin repeat and sterile alpha motif domain-containing protein 1B (1280 aa).

7 ANK repeats span residues 2 to 31 (GKEQELLEAARTGNVGLVEKLLSGKKGLLG), 57 to 86 (SGYTPLHHASLNGHRDVVLKLLQFEASTNV), 90 to 119 (KGCFPLHLAAWRGDVDIVQILIHHGPSHSR), 126 to 155 (EKETALHCAAQYGHSEVVRVLLQELTDPSM), 159 to 188 (RGETPLDLAALYGRLQVVRMLLTAHPNLMS), 192 to 221 (RKHTPLHLAARNGHYATVQVLLEADMDVNT), and 224 to 253 (EKGSALHEAALFGKMDVVQLLLDSGIDANI). 5 disordered regions span residues 299–322 (RHRPIPTPRTSIPSPVPSPSLRHK), 361–399 (MESFGSGRLSDEERNGTLTRINKRPTPPLPPALEEEEKS), 479–573 (SVSD…STGS), 704–723 (NGEARSNCTGGSSPANSNTG), and 755–791 (SNLVAVSPIEEEQWGSRGQSSPGKSSPSRLERTPSFT). Positions 482–491 (DAERGNHGDD) are enriched in basic and acidic residues. 3 stretches are compositionally biased toward polar residues: residues 520–550 (KQRTSLSSSQDVQKPLQNHSGDPSEVSSSLG), 707–723 (ARSNCTGGSSPANSNTG), and 770–782 (SRGQSSPGKSSPS). SAM domains lie at 824-890 (CPVQ…LPRV) and 898-963 (NNPT…RLHE). Disordered stretches follow at residues 960–994 (RLHEDPPQKPPRAISLREPTGNHTPPQLSPSLSQA) and 1208–1243 (GSSTLPESFDSKPSKPVPKPRGNIRKSMEQPSMDQK). The span at 980 to 994 (GNHTPPQLSPSLSQA) shows a compositional bias: polar residues. A PID domain is found at 1071-1223 (IFQSCDYEAY…ESFDSKPSKP (153 aa)).

Its subcellular location is the cytoplasm. In Danio rerio (Zebrafish), this protein is Ankyrin repeat and sterile alpha motif domain-containing protein 1B (anks1b).